A 223-amino-acid chain; its full sequence is MTTQDELKRIAAEKAVEFVPENEYIGIGTGSTINFFIEALGKSGKKIKGAVSTSKKSGELLAQYDIPVVSLNEVSGLAVYIDGADEVNHALQMIKGGGGAHLNEKIVASASEKFICIADESKYVSRLGKFPLPVEVVESARSLVSRKLLAMGGQPELRIGYTTFYGNQIVDVHGLNIDQPLTMEDEINKITGVLENGIFARDAADVLILGTEEGAKVIYPCQG.

Substrate contacts are provided by residues 29 to 32 (TGST), 82 to 85 (DGAD), and 95 to 98 (KGGG). Residue glutamate 104 is the Proton acceptor of the active site. Lysine 122 is a substrate binding site.

The protein belongs to the ribose 5-phosphate isomerase family. As to quaternary structure, homodimer.

The enzyme catalyses aldehydo-D-ribose 5-phosphate = D-ribulose 5-phosphate. The protein operates within carbohydrate degradation; pentose phosphate pathway; D-ribose 5-phosphate from D-ribulose 5-phosphate (non-oxidative stage): step 1/1. Functionally, catalyzes the reversible conversion of ribose-5-phosphate to ribulose 5-phosphate. This Neisseria meningitidis serogroup B (strain ATCC BAA-335 / MC58) protein is Ribose-5-phosphate isomerase A.